The following is a 1013-amino-acid chain: Ephrin type-B receptor 6 (1013 aa).

A signal peptide spans 1-31 (MASENTAGSGSRVAGMVYSLWLLVLGPSVLA). The Extracellular portion of the chain corresponds to 32–590 (LEEVLLDTTG…LPEKLSLVIG (559 aa)). Residues 33–231 (EEVLLDTTGE…FSYTCPSVLR (199 aa)) form the Eph LBD domain. Fibronectin type-III domains are found at residues 363–478 (PPSA…TSHE) and 479–574 (VPSA…TLPQ). N-linked (GlcNAc...) asparagine glycosylation occurs at Asn-472. Residues 591 to 611 (SILGALAFLLLAAITVLAVIF) form a helical membrane-spanning segment. The Cytoplasmic segment spans residues 612–1013 (QRKRRGTGYT…HLRQPGSVEV (402 aa)). Residues 662–911 (IKIEEVIGAG…QLVAAFDKMI (250 aa)) form the Protein kinase domain. 668–676 (IGAGSFGEV) lines the ATP pocket. Positions 940–1004 (PCLDSPQAWL…LHNIQLLQQH (65 aa)) constitute an SAM domain. A PDZ-binding motif is present at residues 1011–1013 (VEV).

Belongs to the protein kinase superfamily. Tyr protein kinase family. Ephrin receptor subfamily. As to quaternary structure, interacts with CBL and EPHB1. Interacts with FYN; this interaction takes place in a ligand-independent manner. Post-translationally, ligand-binding increases phosphorylation on tyrosine residues. Phosphorylation on tyrosine residues is mediated by transphosphorylation by the catalytically active EPHB1 in a ligand-independent manner. Tyrosine phosphorylation of the receptor may act as a switch on the functional transition from cell adhesion/attraction to de-adhesion/repulsion.

It is found in the membrane. Its function is as follows. Kinase-defective receptor for members of the ephrin-B family. Binds to ephrin-B1 and ephrin-B2. Modulates cell adhesion and migration by exerting both positive and negative effects upon stimulation with ephrin-B2. Inhibits JNK activation, T-cell receptor-induced IL-2 secretion and CD25 expression upon stimulation with ephrin-B2. This is Ephrin type-B receptor 6 (Ephb6) from Rattus norvegicus (Rat).